Consider the following 383-residue polypeptide: tRNA-specific 2-thiouridylase MnmA (383 aa).

ATP is bound by residues 30–37 and Leu-56; that span reads GLSGGVDS. Catalysis depends on Cys-117, which acts as the Nucleophile. Cys-117 and Cys-216 are oxidised to a cystine. Gly-142 lines the ATP pocket. An interaction with tRNA region spans residues 166 to 168; that stretch reads KDQ. The active-site Cysteine persulfide intermediate is Cys-216. Residues 321–322 form an interaction with tRNA region; sequence RY.

It belongs to the MnmA/TRMU family.

The protein resides in the cytoplasm. It carries out the reaction S-sulfanyl-L-cysteinyl-[protein] + uridine(34) in tRNA + AH2 + ATP = 2-thiouridine(34) in tRNA + L-cysteinyl-[protein] + A + AMP + diphosphate + H(+). In terms of biological role, catalyzes the 2-thiolation of uridine at the wobble position (U34) of tRNA, leading to the formation of s(2)U34. In Synechococcus sp. (strain CC9605), this protein is tRNA-specific 2-thiouridylase MnmA.